The primary structure comprises 2531 residues: Probable polyketide synthase 26 (2531 aa).

The region spanning 10 to 433 is the Ketosynthase family 3 (KS3) domain; that stretch reads QEDIAIIGFR…GSNCCLVLTE (424 aa). Catalysis depends on for beta-ketoacyl synthase activity residues cysteine 174, histidine 316, and histidine 356. The tract at residues 620–653 is acyl/malonyl transferase; it reads GINPSFIVGHSLGELPMAFCSGMIDFDTVCYLLY. The active-site For acyl/malonyl transferase activity is serine 630. Residues 915–1036 form an N-terminal hotdog fold region; the sequence is MDTLGFSNEK…ANYHLSHRDD (122 aa). The PKS/mFAS DH domain occupies 915–1206; sequence MDTLGFSNEK…LKSLIPLKDP (292 aa). Catalysis depends on histidine 948, which acts as the Proton acceptor; for dehydratase activity. A C-terminal hotdog fold region spans residues 1055–1206; that stretch reads NLTKLSKNQF…LKSLIPLKDP (152 aa). Residue aspartate 1117 is the Proton donor; for dehydratase activity of the active site. Positions 2431-2509 constitute a Carrier domain; sequence ASENPVKDLL…DNIKILTDSY (79 aa). Residue serine 2468 is modified to O-(pantetheine 4'-phosphoryl)serine.

Requires pantetheine 4'-phosphate as cofactor.

Its function is as follows. Probable polyketide synthase. In Dictyostelium discoideum (Social amoeba), this protein is Probable polyketide synthase 26 (pks26).